Reading from the N-terminus, the 189-residue chain is Peptidyl-tRNA hydrolase (189 aa).

Residue Y14 coordinates tRNA. H19 acts as the Proton acceptor in catalysis. Residues F64, N66, and N112 each coordinate tRNA.

It belongs to the PTH family. As to quaternary structure, monomer.

Its subcellular location is the cytoplasm. The catalysed reaction is an N-acyl-L-alpha-aminoacyl-tRNA + H2O = an N-acyl-L-amino acid + a tRNA + H(+). Hydrolyzes ribosome-free peptidyl-tRNAs (with 1 or more amino acids incorporated), which drop off the ribosome during protein synthesis, or as a result of ribosome stalling. Functionally, catalyzes the release of premature peptidyl moieties from peptidyl-tRNA molecules trapped in stalled 50S ribosomal subunits, and thus maintains levels of free tRNAs and 50S ribosomes. In Erythrobacter litoralis (strain HTCC2594), this protein is Peptidyl-tRNA hydrolase.